The chain runs to 342 residues: MKNITIAIDAMGGDHGLEIVIPACIRAVKNNPDLKLLLVGVQDKISASLKKHGMLSCQQFTIVHASEVVTMDELPSHALRNKKDSSMRIAINLVKEGRAQACVSAGNTGALMATARYVLKTLPGIDRPAIVSELPTMGGKTRVIDLGANVDSCAEHLFQFAVMGSALIQAIENKPKPKIGLLNIGVEEIKGNDQVKRTAHMLAECSVMNYVGYVEGDHFYSGDVDLVVCDGFVGNVALKASEGLAKLLLTVLKESFSRNWLTKIAGLIALPALKHLKNRLDPSRYNGASLLGLNGIVVKSHGGANEVGFQHAIEQAVLEVKNNVVDLVRDQINDFINQGLLL.

This sequence belongs to the PlsX family. As to quaternary structure, homodimer. Probably interacts with PlsY.

The protein localises to the cytoplasm. It catalyses the reaction a fatty acyl-[ACP] + phosphate = an acyl phosphate + holo-[ACP]. The protein operates within lipid metabolism; phospholipid metabolism. In terms of biological role, catalyzes the reversible formation of acyl-phosphate (acyl-PO(4)) from acyl-[acyl-carrier-protein] (acyl-ACP). This enzyme utilizes acyl-ACP as fatty acyl donor, but not acyl-CoA. This chain is Phosphate acyltransferase, found in Legionella pneumophila (strain Corby).